Consider the following 220-residue polypeptide: Protein LURP-one-related 12 (220 aa).

The protein belongs to the LOR family.

Might be related to the phospholipid scramblase and tubby-like superfamily of membrane tethered transcription factors. The chain is Protein LURP-one-related 12 from Arabidopsis thaliana (Mouse-ear cress).